We begin with the raw amino-acid sequence, 374 residues long: Chaperone protein DnaJ (374 aa).

Residues 5-70 form the J domain; sequence DYYEVLGVAK…QKRAAYDRYG (66 aa). The CR-type zinc-finger motif lies at 134-212; that stretch reads GFDTEIRVPS…CDGVGRIRRN (79 aa). Zn(2+) is bound by residues C147, C150, C164, C167, C186, C189, C200, and C203. CXXCXGXG motif repeat units lie at residues 147-154, 164-171, 186-193, and 200-207; these read CDTCHGSG, CRTCGGSG, CPTCHGTG, and CPSCDGVG.

It belongs to the DnaJ family. Homodimer. Requires Zn(2+) as cofactor.

Its subcellular location is the cytoplasm. Its function is as follows. Participates actively in the response to hyperosmotic and heat shock by preventing the aggregation of stress-denatured proteins and by disaggregating proteins, also in an autonomous, DnaK-independent fashion. Unfolded proteins bind initially to DnaJ; upon interaction with the DnaJ-bound protein, DnaK hydrolyzes its bound ATP, resulting in the formation of a stable complex. GrpE releases ADP from DnaK; ATP binding to DnaK triggers the release of the substrate protein, thus completing the reaction cycle. Several rounds of ATP-dependent interactions between DnaJ, DnaK and GrpE are required for fully efficient folding. Also involved, together with DnaK and GrpE, in the DNA replication of plasmids through activation of initiation proteins. The sequence is that of Chaperone protein DnaJ from Bordetella petrii (strain ATCC BAA-461 / DSM 12804 / CCUG 43448).